Consider the following 91-residue polypeptide: Small ribosomal subunit protein uS19 (91 aa).

This sequence belongs to the universal ribosomal protein uS19 family.

Protein S19 forms a complex with S13 that binds strongly to the 16S ribosomal RNA. This chain is Small ribosomal subunit protein uS19, found in Synechococcus elongatus (strain ATCC 33912 / PCC 7942 / FACHB-805) (Anacystis nidulans R2).